Here is a 316-residue protein sequence, read N- to C-terminus: MYSKILATGSYLPKQVRSNADLEKMVDTTDEWIFTRSGMKERRIAAADETVATMGAAAAHKACEMAAIDVNEIELIVVATTTHSHAYPSAACQIQGMLAIEDAIAFDVAAACTGFIYALSVADQFIRAGKVKTAFVVGADVNSRVLDEADRGTVVLFGDGAGAVILQASEQAGILSTHLHSSADTDNMLALPIQERGNAQSGFIQMQGNATFKLAVSRLANVVEETLQANNLQKADLDWLVPHQANIRIIAATAKKLEMEMSQVVLTVEKYGNNSAATVPVALDEAVRDGRIQRGQLLLLEAFGGGWTWGSGLVRF.

Catalysis depends on residues C112 and H243. Residues 244–248 (QANIR) form an ACP-binding region. The active site involves N273.

The protein belongs to the thiolase-like superfamily. FabH family. Homodimer.

Its subcellular location is the cytoplasm. The catalysed reaction is malonyl-[ACP] + acetyl-CoA + H(+) = 3-oxobutanoyl-[ACP] + CO2 + CoA. The protein operates within lipid metabolism; fatty acid biosynthesis. Its function is as follows. Catalyzes the condensation reaction of fatty acid synthesis by the addition to an acyl acceptor of two carbons from malonyl-ACP. Catalyzes the first condensation reaction which initiates fatty acid synthesis and may therefore play a role in governing the total rate of fatty acid production. Possesses both acetoacetyl-ACP synthase and acetyl transacylase activities. Its substrate specificity determines the biosynthesis of branched-chain and/or straight-chain of fatty acids. This Haemophilus ducreyi (strain 35000HP / ATCC 700724) protein is Beta-ketoacyl-[acyl-carrier-protein] synthase III.